We begin with the raw amino-acid sequence, 281 residues long: Large ribosomal subunit protein uL2 (281 aa).

The disordered stretch occupies residues 220–281; that stretch reads VRGSVMNPND…RRRDGKALSK (62 aa). Basic residues predominate over residues 258–271; it reads KTRKKNKQSNKMIM. The span at 272–281 shows a compositional bias: basic and acidic residues; it reads RRRDGKALSK.

It belongs to the universal ribosomal protein uL2 family. As to quaternary structure, part of the 50S ribosomal subunit. Forms a bridge to the 30S subunit in the 70S ribosome.

Its function is as follows. One of the primary rRNA binding proteins. Required for association of the 30S and 50S subunits to form the 70S ribosome, for tRNA binding and peptide bond formation. It has been suggested to have peptidyltransferase activity; this is somewhat controversial. Makes several contacts with the 16S rRNA in the 70S ribosome. The polypeptide is Large ribosomal subunit protein uL2 (Lachnoclostridium phytofermentans (strain ATCC 700394 / DSM 18823 / ISDg) (Clostridium phytofermentans)).